The primary structure comprises 67 residues: MKLIEERTYEERLYIYSDDIEARKHFVSELKPKGWMVDNCWVGIDLNQIKQFYRFKRELTDDYVFNR.

The protein is SPbeta prophage-derived uncharacterized protein YoqK (yoqK) of Bacillus subtilis (strain 168).